A 906-amino-acid chain; its full sequence is Protein translocase subunit SecA (906 aa).

ATP-binding positions include glutamine 90, 108–112 (GEGKT), and aspartate 503. The disordered stretch occupies residues 845–882 (TAAEAPASVPQPQAAVAPQPAPELVGADNGESQPQAWG). Positions 846–862 (AAEAPASVPQPQAAVAP) are enriched in low complexity. Positions 890, 892, 901, and 902 each coordinate Zn(2+).

It belongs to the SecA family. In terms of assembly, monomer and homodimer. Part of the essential Sec protein translocation apparatus which comprises SecA, SecYEG and auxiliary proteins SecDF-YajC and YidC. Zn(2+) serves as cofactor.

It is found in the cell inner membrane. The protein localises to the cytoplasm. The enzyme catalyses ATP + H2O + cellular proteinSide 1 = ADP + phosphate + cellular proteinSide 2.. In terms of biological role, part of the Sec protein translocase complex. Interacts with the SecYEG preprotein conducting channel. Has a central role in coupling the hydrolysis of ATP to the transfer of proteins into and across the cell membrane, serving both as a receptor for the preprotein-SecB complex and as an ATP-driven molecular motor driving the stepwise translocation of polypeptide chains across the membrane. The protein is Protein translocase subunit SecA of Cereibacter sphaeroides (strain ATCC 17025 / ATH 2.4.3) (Rhodobacter sphaeroides).